Consider the following 176-residue polypeptide: Putative phosphohydrolase YueE (176 aa).

In terms of domain architecture, HD spans 23–139; the sequence is GVAHAIACAY…VKKADELDEE (117 aa).

This chain is Putative phosphohydrolase YueE (yueE), found in Bacillus subtilis (strain 168).